A 278-amino-acid polypeptide reads, in one-letter code: Probable septum site-determining protein MinC (278 aa).

The tract at residues arginine 104–serine 167 is disordered.

It belongs to the MinC family. Interacts with MinD and FtsZ.

Cell division inhibitor that blocks the formation of polar Z ring septums. Rapidly oscillates between the poles of the cell to destabilize FtsZ filaments that have formed before they mature into polar Z rings. Prevents FtsZ polymerization. The chain is Probable septum site-determining protein MinC from Bordetella avium (strain 197N).